A 314-amino-acid polypeptide reads, in one-letter code: tRNA pseudouridine synthase B (314 aa).

His-43 is a binding site for substrate. The active-site Nucleophile is Asp-48. Residues Tyr-76, Tyr-179, and Leu-200 each coordinate substrate.

Belongs to the pseudouridine synthase TruB family. Type 1 subfamily.

It carries out the reaction uridine(55) in tRNA = pseudouridine(55) in tRNA. In terms of biological role, responsible for synthesis of pseudouridine from uracil-55 in the psi GC loop of transfer RNAs. This chain is tRNA pseudouridine synthase B, found in Citrobacter koseri (strain ATCC BAA-895 / CDC 4225-83 / SGSC4696).